The primary structure comprises 714 residues: Polyribonucleotide nucleotidyltransferase (714 aa).

Mg(2+) contacts are provided by aspartate 487 and aspartate 493. In terms of domain architecture, KH spans 554-613; that stretch reads PRIEVLQIPTDKIRDVIGTGGKVIREIVEKTGAKINIEDDGTVKVASANGESIRAAIKWI. In terms of domain architecture, S1 motif spans 623-691; that stretch reads GQIYDGTVVK…DRGKVRLSMK (69 aa).

This sequence belongs to the polyribonucleotide nucleotidyltransferase family. Requires Mg(2+) as cofactor.

It localises to the cytoplasm. It catalyses the reaction RNA(n+1) + phosphate = RNA(n) + a ribonucleoside 5'-diphosphate. Its function is as follows. Involved in mRNA degradation. Catalyzes the phosphorolysis of single-stranded polyribonucleotides processively in the 3'- to 5'-direction. This chain is Polyribonucleotide nucleotidyltransferase, found in Afipia carboxidovorans (strain ATCC 49405 / DSM 1227 / KCTC 32145 / OM5) (Oligotropha carboxidovorans).